The primary structure comprises 155 residues: Transcriptional repressor NrdR (155 aa).

Residues 3–34 (CPYCGHLEDRVVDSRETQDGQATRRRRACLSC) fold into a zinc finger. The region spanning 49 to 139 (PQVVKKDGRR…VYRAFRDVGE (91 aa)) is the ATP-cone domain.

The protein belongs to the NrdR family. Zn(2+) serves as cofactor.

Negatively regulates transcription of bacterial ribonucleotide reductase nrd genes and operons by binding to NrdR-boxes. The chain is Transcriptional repressor NrdR from Anaeromyxobacter sp. (strain K).